Reading from the N-terminus, the 227-residue chain is Probable minor pilin MMP0600 (227 aa).

Positions 1–7 (MAKFSKG) are excised as a propeptide. The short motif at 8–16 (QISIELILL) is the QXSXEXXXL element.

Post-translationally, the N-terminus is probably cleaved by the prepilin peptidase EppA, which recognizes the class III signal sequence.

It is found in the secreted. It localises to the cell surface. The protein localises to the fimbrium. This Methanococcus maripaludis (strain DSM 14266 / JCM 13030 / NBRC 101832 / S2 / LL) protein is Probable minor pilin MMP0600.